A 753-amino-acid chain; its full sequence is 5-methyltetrahydropteroyltriglutamate--homocysteine methyltransferase (753 aa).

5-methyltetrahydropteroyltri-L-glutamate-binding positions include arginine 17–lysine 20 and lysine 117. Residues isoleucine 431 to serine 433 and glutamate 484 each bind L-homocysteine. L-methionine contacts are provided by residues isoleucine 431–serine 433 and glutamate 484. 5-methyltetrahydropteroyltri-L-glutamate is bound by residues arginine 515–cysteine 516 and tryptophan 561. Aspartate 599 serves as a coordination point for L-homocysteine. Position 599 (aspartate 599) interacts with L-methionine. Glutamate 605 lines the 5-methyltetrahydropteroyltri-L-glutamate pocket. Zn(2+)-binding residues include histidine 641, cysteine 643, and glutamate 665. The Proton donor role is filled by histidine 694. Position 726 (cysteine 726) interacts with Zn(2+).

This sequence belongs to the vitamin-B12 independent methionine synthase family. Zn(2+) is required as a cofactor.

It carries out the reaction 5-methyltetrahydropteroyltri-L-glutamate + L-homocysteine = tetrahydropteroyltri-L-glutamate + L-methionine. It participates in amino-acid biosynthesis; L-methionine biosynthesis via de novo pathway; L-methionine from L-homocysteine (MetE route): step 1/1. Functionally, catalyzes the transfer of a methyl group from 5-methyltetrahydrofolate to homocysteine resulting in methionine formation. This is 5-methyltetrahydropteroyltriglutamate--homocysteine methyltransferase from Escherichia coli O6:H1 (strain CFT073 / ATCC 700928 / UPEC).